The sequence spans 535 residues: Butyrophilin-like protein 9 (535 aa).

Residues 1-34 form the signal peptide; it reads MVDLSVSPDSLKPVSLTSSLVFLMHLLLLQPGEP. At 35-256 the chain is on the extracellular side; it reads SSEVKVLGPE…VFVPGASAWK (222 aa). The Ig-like V-type domain occupies 54-135; the sequence is EVEFPCHLWP…SDKGTYGCRF (82 aa). A disulfide bond links Cys59 and Cys133. 3 N-linked (GlcNAc...) asparagine glycosylation sites follow: Asn102, Asn139, and Asn224. Residues 257–277 form a helical membrane-spanning segment; sequence SAFVATLPLLLVLAALALGVL. Residues 276–315 are a coiled coil; it reads VLRKQRRSREKLRKQAEKRQEKLTAELEKLQTELDWRRAE. Topologically, residues 278–535 are cytoplasmic; it reads RKQRRSREKL…EPADPALDWW (258 aa). The B30.2/SPRY domain maps to 310 to 509; it reads DWRRAEGQAE…LTICPLPVRG (200 aa). Residues 340 to 367 form a disordered region; it reads SLEVSEDGKSVSSRGAPPGPAPGHPQRF.

The protein belongs to the immunoglobulin superfamily. BTN/MOG family.

Its subcellular location is the membrane. The protein is Butyrophilin-like protein 9 (BTNL9) of Homo sapiens (Human).